The chain runs to 444 residues: 23S rRNA (uracil(1939)-C(5))-methyltransferase RlmD (444 aa).

The region spanning 5-67 (RNRLDRTPFQ…RHFDEAKTVE (63 aa)) is the TRAM domain. [4Fe-4S] cluster is bound by residues Cys80, Cys86, Cys89, and Cys168. S-adenosyl-L-methionine contacts are provided by Gln276, Phe305, Asn310, Glu326, Asp353, and Asp374. Cys400 acts as the Nucleophile in catalysis.

This sequence belongs to the class I-like SAM-binding methyltransferase superfamily. RNA M5U methyltransferase family. RlmD subfamily.

It catalyses the reaction uridine(1939) in 23S rRNA + S-adenosyl-L-methionine = 5-methyluridine(1939) in 23S rRNA + S-adenosyl-L-homocysteine + H(+). Catalyzes the formation of 5-methyl-uridine at position 1939 (m5U1939) in 23S rRNA. The polypeptide is 23S rRNA (uracil(1939)-C(5))-methyltransferase RlmD (Xanthomonas euvesicatoria pv. vesicatoria (strain 85-10) (Xanthomonas campestris pv. vesicatoria)).